The primary structure comprises 348 residues: Glycerol-1-phosphate dehydrogenase [NAD(P)+] (348 aa).

NAD(+) contacts are provided by residues 94 to 98 (GKVID) and Thr116. Position 121 (Asp121) interacts with substrate. Residue Ser125 coordinates NAD(+). Residue Asp168 coordinates substrate. Residues Asp168 and His248 each contribute to the Zn(2+) site. His252 provides a ligand contact to substrate. Zn(2+) is bound at residue His264.

Belongs to the glycerol-1-phosphate dehydrogenase family. In terms of assembly, homooctamer. The cofactor is Zn(2+).

It is found in the cytoplasm. The enzyme catalyses sn-glycerol 1-phosphate + NAD(+) = dihydroxyacetone phosphate + NADH + H(+). It catalyses the reaction sn-glycerol 1-phosphate + NADP(+) = dihydroxyacetone phosphate + NADPH + H(+). It functions in the pathway membrane lipid metabolism; glycerophospholipid metabolism. In terms of biological role, catalyzes the NAD(P)H-dependent reduction of dihydroxyacetonephosphate (DHAP or glycerone phosphate) to glycerol 1-phosphate (G1P). The G1P thus generated is used as the glycerophosphate backbone of phospholipids in the cellular membranes of Archaea. This is Glycerol-1-phosphate dehydrogenase [NAD(P)+] from Methanosphaera stadtmanae (strain ATCC 43021 / DSM 3091 / JCM 11832 / MCB-3).